A 569-amino-acid polypeptide reads, in one-letter code: uncharacterized protein (569 aa).

A helical membrane pass occupies residues 2-22 (VVIAALLGSLAVLAFLFYLWY).

It localises to the membrane. This is an uncharacterized protein from Mycoplasma pneumoniae (strain ATCC 29342 / M129 / Subtype 1) (Mycoplasmoides pneumoniae).